A 475-amino-acid chain; its full sequence is Aspartyl/glutamyl-tRNA(Asn/Gln) amidotransferase subunit B (475 aa).

The protein belongs to the GatB/GatE family. GatB subfamily. As to quaternary structure, heterotrimer of A, B and C subunits.

It carries out the reaction L-glutamyl-tRNA(Gln) + L-glutamine + ATP + H2O = L-glutaminyl-tRNA(Gln) + L-glutamate + ADP + phosphate + H(+). It catalyses the reaction L-aspartyl-tRNA(Asn) + L-glutamine + ATP + H2O = L-asparaginyl-tRNA(Asn) + L-glutamate + ADP + phosphate + 2 H(+). Allows the formation of correctly charged Asn-tRNA(Asn) or Gln-tRNA(Gln) through the transamidation of misacylated Asp-tRNA(Asn) or Glu-tRNA(Gln) in organisms which lack either or both of asparaginyl-tRNA or glutaminyl-tRNA synthetases. The reaction takes place in the presence of glutamine and ATP through an activated phospho-Asp-tRNA(Asn) or phospho-Glu-tRNA(Gln). The polypeptide is Aspartyl/glutamyl-tRNA(Asn/Gln) amidotransferase subunit B (Bacillus cereus (strain ZK / E33L)).